The following is a 198-amino-acid chain: FMN-dependent NADH:quinone oxidoreductase (198 aa).

FMN is bound by residues Ser-10, 16 to 18 (SQS), 94 to 97 (MYNF), and 138 to 141 (TRGG).

It belongs to the azoreductase type 1 family. Homodimer. Requires FMN as cofactor.

It carries out the reaction 2 a quinone + NADH + H(+) = 2 a 1,4-benzosemiquinone + NAD(+). The catalysed reaction is N,N-dimethyl-1,4-phenylenediamine + anthranilate + 2 NAD(+) = 2-(4-dimethylaminophenyl)diazenylbenzoate + 2 NADH + 2 H(+). Its function is as follows. Quinone reductase that provides resistance to thiol-specific stress caused by electrophilic quinones. Also exhibits azoreductase activity. Catalyzes the reductive cleavage of the azo bond in aromatic azo compounds to the corresponding amines. This is FMN-dependent NADH:quinone oxidoreductase from Shewanella sp. (strain MR-4).